The following is a 216-amino-acid chain: Adenylate kinase (216 aa).

10-15 (GAGKGT) contributes to the ATP binding site. The NMP stretch occupies residues 30 to 59 (STGDMLRAAVKAGTPLGLELKKVMDAGQLV). Residues T31, R36, 57 to 59 (QLV), 85 to 88 (GFPR), and Q92 each bind AMP. The tract at residues 122–159 (GRRVHLASGRTYHIQYNPPKVEGKDDVTGEDLIQRDDD) is LID. ATP contacts are provided by residues R123 and 132–133 (TY). Positions 156 and 167 each coordinate AMP. ATP is bound at residue G202.

The protein belongs to the adenylate kinase family. Monomer.

It is found in the cytoplasm. It carries out the reaction AMP + ATP = 2 ADP. Its pathway is purine metabolism; AMP biosynthesis via salvage pathway; AMP from ADP: step 1/1. In terms of biological role, catalyzes the reversible transfer of the terminal phosphate group between ATP and AMP. Plays an important role in cellular energy homeostasis and in adenine nucleotide metabolism. The sequence is that of Adenylate kinase from Pseudomonas putida (strain GB-1).